The primary structure comprises 202 residues: MNILRKIVKSCKDEEDQKPALVSAPPDDDDLWLPPPEYVPLTEITGKKNMRNFCVNGEIKICSPNGYSFRILRHILKSFDGVYSGNRRMIGLVKVVIGLALSGAPVPEGMNWVYKIRRTLVFQWAESRGPLDGEELEYSQEITWDDDSEFIGLQIRVSARQCHIQGRVWCINMNSRACQLWSDMSLKTQQSDEDKNTSLLLE.

A PPXY motif motif is present at residues proline 35–tyrosine 38. The tract at residues lysine 115–isoleucine 151 is essential for glycoprotein binding.

The protein belongs to the lyssavirus matrix protein family. Homomultimer. Interacts with nucleoprotein and with the cytoplasmic domain of glycoprotein.

It localises to the virion membrane. The protein resides in the host endomembrane system. Functionally, plays a major role in assembly and budding of virion. Completely covers the ribonucleoprotein coil and keep it in condensed bullet-shaped form. Inhibits viral transcription and stimulates replication. Plays a major role in early induction of TRAIL-mediated apoptosis in infected neurons. In Aravan virus (ARAV), this protein is Matrix protein (M).